The primary structure comprises 99 residues: Nucleoid-associated protein LL0120 (99 aa).

This sequence belongs to the YbaB/EbfC family. In terms of assembly, homodimer.

The protein localises to the cytoplasm. It localises to the nucleoid. Binds to DNA and alters its conformation. May be involved in regulation of gene expression, nucleoid organization and DNA protection. The sequence is that of Nucleoid-associated protein LL0120 (ybcG) from Lactococcus lactis subsp. lactis (strain IL1403) (Streptococcus lactis).